The primary structure comprises 340 residues: Fructose-1,6-bisphosphatase, cytosolic (340 aa).

Mg(2+) is bound by residues Glu-71, Glu-100, Asp-121, Leu-123, and Asp-124. Residues 124–127 (DGSS), Asn-215, Tyr-247, Tyr-267, and Lys-277 contribute to the substrate site. Glu-283 lines the Mg(2+) pocket.

Belongs to the FBPase class 1 family. Requires Mg(2+) as cofactor.

Its subcellular location is the cytoplasm. The catalysed reaction is beta-D-fructose 1,6-bisphosphate + H2O = beta-D-fructose 6-phosphate + phosphate. The sequence is that of Fructose-1,6-bisphosphatase, cytosolic from Solanum tuberosum (Potato).